The following is a 267-amino-acid chain: 4-hydroxy-tetrahydrodipicolinate reductase (267 aa).

NAD(+) contacts are provided by residues 10–15 and glutamate 36; that span reads GCGGRM. Arginine 37 lines the NADP(+) pocket. NAD(+) is bound by residues 99 to 101 and 123 to 126; these read GTT and APNF. Histidine 156 (proton donor/acceptor) is an active-site residue. Residue histidine 157 coordinates (S)-2,3,4,5-tetrahydrodipicolinate. Residue lysine 160 is the Proton donor of the active site. (S)-2,3,4,5-tetrahydrodipicolinate is bound at residue 166 to 167; sequence GT.

It belongs to the DapB family.

It is found in the cytoplasm. It catalyses the reaction (S)-2,3,4,5-tetrahydrodipicolinate + NAD(+) + H2O = (2S,4S)-4-hydroxy-2,3,4,5-tetrahydrodipicolinate + NADH + H(+). The catalysed reaction is (S)-2,3,4,5-tetrahydrodipicolinate + NADP(+) + H2O = (2S,4S)-4-hydroxy-2,3,4,5-tetrahydrodipicolinate + NADPH + H(+). The protein operates within amino-acid biosynthesis; L-lysine biosynthesis via DAP pathway; (S)-tetrahydrodipicolinate from L-aspartate: step 4/4. Its function is as follows. Catalyzes the conversion of 4-hydroxy-tetrahydrodipicolinate (HTPA) to tetrahydrodipicolinate. In Laribacter hongkongensis (strain HLHK9), this protein is 4-hydroxy-tetrahydrodipicolinate reductase.